Here is a 416-residue protein sequence, read N- to C-terminus: Subtilisin-like protease 12 (416 aa).

The first 19 residues, 1-19 (MSILKMMLIYFAIFWVVNA), serve as a signal peptide directing secretion. The propeptide occupies 20-116 (AQLLDIDSQG…VEPNKEMQVA (97 aa)). The 81-residue stretch at 35 to 115 (YIVVMKDRVS…FVEPNKEMQV (81 aa)) folds into the Inhibitor I9 domain. Residues asparagine 123, asparagine 136, and asparagine 150 are each glycosylated (N-linked (GlcNAc...) asparagine). One can recognise a Peptidase S8 domain in the interval 125 to 416 (TWGLSRISHK…NKLLYNGSGA (292 aa)). Catalysis depends on charge relay system residues aspartate 157 and histidine 188. 4 N-linked (GlcNAc...) asparagine glycosylation sites follow: asparagine 249, asparagine 305, asparagine 334, and asparagine 353. Serine 362 functions as the Charge relay system in the catalytic mechanism. Asparagine 404 and asparagine 412 each carry an N-linked (GlcNAc...) asparagine glycan.

Belongs to the peptidase S8 family.

The protein localises to the secreted. In terms of biological role, secreted subtilisin-like serine protease with keratinolytic activity that contributes to pathogenicity. This is Subtilisin-like protease 12 (SUB12) from Arthroderma benhamiae (strain ATCC MYA-4681 / CBS 112371) (Trichophyton mentagrophytes).